A 103-amino-acid polypeptide reads, in one-letter code: Small ribosomal subunit protein uS10 (103 aa).

This sequence belongs to the universal ribosomal protein uS10 family. As to quaternary structure, part of the 30S ribosomal subunit.

In terms of biological role, involved in the binding of tRNA to the ribosomes. This Sulfurovum sp. (strain NBC37-1) protein is Small ribosomal subunit protein uS10.